A 373-amino-acid polypeptide reads, in one-letter code: Bifunctional enzyme IspD/IspF (373 aa).

Positions methionine 1 to arginine 213 are 2-C-methyl-D-erythritol 4-phosphate cytidylyltransferase. The 2-C-methyl-D-erythritol 2,4-cyclodiphosphate synthase stretch occupies residues arginine 213–isoleucine 373. Positions 219 and 221 each coordinate a divalent metal cation. 4-CDP-2-C-methyl-D-erythritol 2-phosphate contacts are provided by residues aspartate 219–histidine 221 and histidine 245–serine 246. Histidine 253 serves as a coordination point for a divalent metal cation. 4-CDP-2-C-methyl-D-erythritol 2-phosphate contacts are provided by residues aspartate 267 to glycine 269, phenylalanine 272 to aspartate 276, threonine 343 to glutamate 346, phenylalanine 350, and arginine 353.

The protein in the N-terminal section; belongs to the IspD/TarI cytidylyltransferase family. IspD subfamily. In the C-terminal section; belongs to the IspF family. It depends on a divalent metal cation as a cofactor.

It carries out the reaction 2-C-methyl-D-erythritol 4-phosphate + CTP + H(+) = 4-CDP-2-C-methyl-D-erythritol + diphosphate. The catalysed reaction is 4-CDP-2-C-methyl-D-erythritol 2-phosphate = 2-C-methyl-D-erythritol 2,4-cyclic diphosphate + CMP. It functions in the pathway isoprenoid biosynthesis; isopentenyl diphosphate biosynthesis via DXP pathway; isopentenyl diphosphate from 1-deoxy-D-xylulose 5-phosphate: step 2/6. The protein operates within isoprenoid biosynthesis; isopentenyl diphosphate biosynthesis via DXP pathway; isopentenyl diphosphate from 1-deoxy-D-xylulose 5-phosphate: step 4/6. Its function is as follows. Bifunctional enzyme that catalyzes the formation of 4-diphosphocytidyl-2-C-methyl-D-erythritol from CTP and 2-C-methyl-D-erythritol 4-phosphate (MEP) (IspD), and catalyzes the conversion of 4-diphosphocytidyl-2-C-methyl-D-erythritol 2-phosphate (CDP-ME2P) to 2-C-methyl-D-erythritol 2,4-cyclodiphosphate (ME-CPP) with a corresponding release of cytidine 5-monophosphate (CMP) (IspF). This chain is Bifunctional enzyme IspD/IspF, found in Nitratiruptor sp. (strain SB155-2).